A 373-amino-acid chain; its full sequence is Transaldolase (373 aa).

The active-site Schiff-base intermediate with substrate is the lysine 143.

This sequence belongs to the transaldolase family. Type 2 subfamily.

The protein resides in the cytoplasm. The catalysed reaction is D-sedoheptulose 7-phosphate + D-glyceraldehyde 3-phosphate = D-erythrose 4-phosphate + beta-D-fructose 6-phosphate. It participates in carbohydrate degradation; pentose phosphate pathway; D-glyceraldehyde 3-phosphate and beta-D-fructose 6-phosphate from D-ribose 5-phosphate and D-xylulose 5-phosphate (non-oxidative stage): step 2/3. Its function is as follows. Transaldolase is important for the balance of metabolites in the pentose-phosphate pathway. This is Transaldolase from Mycobacterium marinum (strain ATCC BAA-535 / M).